Here is a 569-residue protein sequence, read N- to C-terminus: Urease subunit alpha (569 aa).

One can recognise a Urease domain in the interval 131 to 569; the sequence is GSIDTHIHFI…VPMAQRYFLL (439 aa). Histidine 136, histidine 138, and lysine 219 together coordinate Ni(2+). Residue lysine 219 is modified to N6-carboxylysine. Histidine 221 provides a ligand contact to substrate. Ni(2+) is bound by residues histidine 248 and histidine 274. Histidine 322 acts as the Proton donor in catalysis. Aspartate 362 is a Ni(2+) binding site.

The protein belongs to the metallo-dependent hydrolases superfamily. Urease alpha subunit family. In terms of assembly, heterotrimer of UreA (gamma), UreB (beta) and UreC (alpha) subunits. Three heterotrimers associate to form the active enzyme. The cofactor is Ni cation. Post-translationally, carboxylation allows a single lysine to coordinate two nickel ions.

It is found in the cytoplasm. The catalysed reaction is urea + 2 H2O + H(+) = hydrogencarbonate + 2 NH4(+). It participates in nitrogen metabolism; urea degradation; CO(2) and NH(3) from urea (urease route): step 1/1. This Prochlorococcus marinus (strain MIT 9215) protein is Urease subunit alpha.